The chain runs to 93 residues: SH3 domain-binding glutamic acid-rich-like protein 3 (93 aa).

An N-acetylserine modification is found at Ser2. In terms of domain architecture, Glutaredoxin spans 2–93 (SGLRVYSTSV…NTLQEFLKLA (92 aa)). Residue Thr9 is glycosylated (O-linked (GalNAc...) threonine).

Belongs to the SH3BGR family. Homodimer. Interacts with MYO1C (via its IQ motifs); the interaction is dependent on calcium and takes place at membrane ruffles. In terms of processing, may be glycosylated.

The protein resides in the cytoplasm. Its subcellular location is the cytosol. The protein localises to the cell projection. It is found in the ruffle membrane. It localises to the nucleus. Its function is as follows. Could act as a modulator of glutaredoxin biological activity. May play a role in cytoskeleton organization. This is SH3 domain-binding glutamic acid-rich-like protein 3 (SH3BGRL3) from Bos taurus (Bovine).